Here is an 881-residue protein sequence, read N- to C-terminus: Alanine--tRNA ligase (881 aa).

Zn(2+) is bound by residues His-566, His-570, Cys-668, and His-672.

Belongs to the class-II aminoacyl-tRNA synthetase family. The cofactor is Zn(2+).

It is found in the cytoplasm. The catalysed reaction is tRNA(Ala) + L-alanine + ATP = L-alanyl-tRNA(Ala) + AMP + diphosphate. Its function is as follows. Catalyzes the attachment of alanine to tRNA(Ala) in a two-step reaction: alanine is first activated by ATP to form Ala-AMP and then transferred to the acceptor end of tRNA(Ala). Also edits incorrectly charged Ser-tRNA(Ala) and Gly-tRNA(Ala) via its editing domain. The sequence is that of Alanine--tRNA ligase from Frankia alni (strain DSM 45986 / CECT 9034 / ACN14a).